The sequence spans 283 residues: NFU1 iron-sulfur cluster scaffold homolog, mitochondrial (283 aa).

The N-terminal 30 residues, 1–30 (MSKFLSQAALNTLRNTRLGSRQLVRSFAGI), are a transit peptide targeting the mitochondrion. The tract at residues 182 to 250 (IKELLDTRIR…IPEVESVEQV (69 aa)) is nifU. The [4Fe-4S] cluster site is built by Cys-219 and Cys-222.

The protein belongs to the NifU family.

The protein resides in the mitochondrion. In terms of biological role, molecular scaffold for [Fe-S] cluster assembly of mitochondrial iron-sulfur proteins. The chain is NFU1 iron-sulfur cluster scaffold homolog, mitochondrial from Drosophila yakuba (Fruit fly).